The chain runs to 710 residues: Pentatricopeptide repeat-containing protein At1g02060, chloroplastic (710 aa).

A chloroplast-targeting transit peptide spans 1–21; it reads MVSSVPKLHALFVSKSQPVLR. PPR repeat units follow at residues 137 to 171, 172 to 202, 208 to 242, 243 to 277, 280 to 314, 315 to 351, 352 to 386, 387 to 421, 429 to 459, 463 to 497, 498 to 532, and 533 to 567; these read QDRY…GISP, SVLT…MRRT, DSYT…HCNP, DVVT…ATDV, NVVS…GLKP, NAVT…TFAP, DACT…KLHP, DSAS…EVLL, LAAA…LMKR, DPPS…EFVP, DLET…SYLP, and VATT…RIRQ.

Belongs to the PPR family. P subfamily.

It is found in the plastid. The protein localises to the chloroplast. This is Pentatricopeptide repeat-containing protein At1g02060, chloroplastic from Arabidopsis thaliana (Mouse-ear cress).